Here is a 121-residue protein sequence, read N- to C-terminus: ATP synthase epsilon chain (121 aa).

The protein belongs to the ATPase epsilon chain family. As to quaternary structure, F-type ATPases have 2 components, CF(1) - the catalytic core - and CF(0) - the membrane proton channel. CF(1) has five subunits: alpha(3), beta(3), gamma(1), delta(1), epsilon(1). CF(0) has three main subunits: a, b and c.

The protein localises to the cell membrane. Functionally, produces ATP from ADP in the presence of a proton gradient across the membrane. This chain is ATP synthase epsilon chain (atpC), found in Mycobacterium bovis (strain ATCC BAA-935 / AF2122/97).